The primary structure comprises 445 residues: Argininosuccinate synthase (445 aa).

ATP contacts are provided by residues alanine 17 to serine 25 and alanine 43. Residue tyrosine 99 coordinates L-citrulline. ATP-binding residues include glycine 129 and threonine 131. Threonine 131, asparagine 135, and aspartate 136 together coordinate L-aspartate. Asparagine 135 is a binding site for L-citrulline. Aspartate 136 contributes to the ATP binding site. Positions 139 and 192 each coordinate L-citrulline. An ATP-binding site is contributed by aspartate 194. L-citrulline contacts are provided by threonine 201, glutamate 203, and glutamate 280.

This sequence belongs to the argininosuccinate synthase family. Type 2 subfamily. As to quaternary structure, homotetramer.

Its subcellular location is the cytoplasm. The enzyme catalyses L-citrulline + L-aspartate + ATP = 2-(N(omega)-L-arginino)succinate + AMP + diphosphate + H(+). It participates in amino-acid biosynthesis; L-arginine biosynthesis; L-arginine from L-ornithine and carbamoyl phosphate: step 2/3. This chain is Argininosuccinate synthase, found in Afipia carboxidovorans (strain ATCC 49405 / DSM 1227 / KCTC 32145 / OM5) (Oligotropha carboxidovorans).